We begin with the raw amino-acid sequence, 303 residues long: Growth/differentiation factor 15 (303 aa).

The signal sequence occupies residues 1–30 (MAPPALQAQPPGGSQLRFLLFLLLLLLLLS). A propeptide spanning residues 31-188 (WPSQGDALAM…LRVAAGRGRR (158 aa)) is cleaved from the precursor. Asn71 is a glycosylation site (N-linked (GlcNAc...) asparagine). 4 cysteine pairs are disulfide-bonded: Cys198/Cys205, Cys206/Cys269, Cys235/Cys300, and Cys239/Cys302.

It belongs to the TGF-beta family. As to quaternary structure, homodimer; disulfide-linked. Interacts with GFRAL and RET; ligand of GFRAL, which mediates GDF15 internalization and cellular signaling through interaction with RET via the formation of a 2:2:2 ternary complex composed of GDF15, GFRAL and RET. Detected in plasma (at protein level). Highly expressed in liver. Expressed in the distal small intestine, colon and kidney. Expressed in skeletal muscle in response to mitochondrial stress. Expressed by cardiomyocytes, expression is highly increased in heart diseases. Also detected in subcutaneous fat.

The protein localises to the secreted. Hormone produced in response to various stresses to confer information about those stresses to the brain, and trigger an aversive response, characterized by nausea and/or loss of appetite. The aversive response is both required to reduce continuing exposure to those stresses at the time of exposure and to promote avoidance behavior in the future. Acts by binding to its receptor, GFRAL, activating GFRAL-expressing neurons localized in the area postrema and nucleus tractus solitarius of the brainstem. It then triggers the activation of neurons localized within the parabrachial nucleus and central amygdala, which constitutes part of the 'emergency circuit' that shapes responses to stressful conditions. The GDF15-GFRAL signal induces expression of genes involved in metabolism, such as lipid metabolism in adipose tissues. Required for avoidance behavior in response to food allergens: induced downstream of mast cell activation to promote aversion and minimize harmful effects of exposure to noxious substances. In addition to suppress appetite, also promotes weight loss by enhancing energy expenditure in muscle: acts by increasing calcium futile cycling in muscle. Contributes to the effect of metformin, an anti-diabetic drug, on appetite reduction and weight loss: produced in the kidney in response to metformin treatment, thereby activating the GDF15-GFRAL response, leading to reduced appetite and weight. Produced in response to anticancer drugs, such as camptothecin or cisplatin, promoting nausea and contributing to malnutrition. Overproduced in many cancers, promoting anorexia in cancer (cachexia). Responsible for the risk of nausea during pregnancy: high levels of GDF15 during pregnancy, mostly originating from embryos, are associated with increased nausea. Maternal sensitivity to nausea is probably determined by pre-pregnancy exposure to GDF15, females with naturally high level of GDF15 being less susceptible to nausea than female mice with low levels of GDF15 before pregnancy. Promotes metabolic adaptation in response to systemic inflammation caused by bacterial and viral infections in order to promote tissue tolerance and prevent tissue damage. Required for tissue tolerance in response to myocardial infarction by acting as an inhibitor of leukocyte integring activation, thereby protecting against cardiac rupture. Inhibits growth hormone signaling on hepatocytes. This chain is Growth/differentiation factor 15, found in Mus musculus (Mouse).